Consider the following 197-residue polypeptide: Na(+)-translocating NADH-quinone reductase subunit E (197 aa).

The next 6 helical transmembrane spans lie at 11–31 (SVFIENMALSFFLGMCTFLAV), 35–55 (VSTAFGLGVAVIFVLGLSVPV), 76–96 (FLKFITFIGVIAALVQILEMF), 108–128 (LGIYLPLITVNCAIFGAVSFM), 139–159 (VVYGFGAGLGWMLAIVALAGI), and 175–195 (LGITFIAAGLMAMAFMSFSGI).

Belongs to the NqrDE/RnfAE family. In terms of assembly, composed of six subunits; NqrA, NqrB, NqrC, NqrD, NqrE and NqrF.

The protein resides in the cell inner membrane. It carries out the reaction a ubiquinone + n Na(+)(in) + NADH + H(+) = a ubiquinol + n Na(+)(out) + NAD(+). In terms of biological role, NQR complex catalyzes the reduction of ubiquinone-1 to ubiquinol by two successive reactions, coupled with the transport of Na(+) ions from the cytoplasm to the periplasm. NqrA to NqrE are probably involved in the second step, the conversion of ubisemiquinone to ubiquinol. In Neisseria meningitidis serogroup B (strain ATCC BAA-335 / MC58), this protein is Na(+)-translocating NADH-quinone reductase subunit E.